We begin with the raw amino-acid sequence, 691 residues long: DNA ligase (691 aa).

Residues 41–45 (DAEYD), 90–91 (SL), and Glu130 contribute to the NAD(+) site. Lys132 functions as the N6-AMP-lysine intermediate in the catalytic mechanism. NAD(+) contacts are provided by Arg153, Glu190, Lys307, and Lys331. Zn(2+) is bound by residues Cys425, Cys428, Cys443, and Cys449. The BRCT domain occupies 610 to 691 (APQGVLAGKT…LHQLLEGNTP (82 aa)).

The protein belongs to the NAD-dependent DNA ligase family. LigA subfamily. Mg(2+) serves as cofactor. Mn(2+) is required as a cofactor.

The enzyme catalyses NAD(+) + (deoxyribonucleotide)n-3'-hydroxyl + 5'-phospho-(deoxyribonucleotide)m = (deoxyribonucleotide)n+m + AMP + beta-nicotinamide D-nucleotide.. DNA ligase that catalyzes the formation of phosphodiester linkages between 5'-phosphoryl and 3'-hydroxyl groups in double-stranded DNA using NAD as a coenzyme and as the energy source for the reaction. It is essential for DNA replication and repair of damaged DNA. In Burkholderia ambifaria (strain ATCC BAA-244 / DSM 16087 / CCUG 44356 / LMG 19182 / AMMD) (Burkholderia cepacia (strain AMMD)), this protein is DNA ligase.